Consider the following 105-residue polypeptide: Endogenous retrovirus group K member 16 Rec protein (105 aa).

A disordered region spans residues 1 to 41 (MNPSEMQRKAPPRRRRHRNRAPSSHKMNKMMMSEEQMKLPS). Residues 10-20 (APPRRRRHRNR) show a composition bias toward basic residues. The short motif at 13–20 (RRRRHRNR) is the Nuclear localization signal element. The Nuclear export signal motif lies at 50–59 (WAQLNKLTQL).

Forms homodimers, homotrimers, and homotetramers via a C-terminal domain. Associates with XPO1 and with ZNF145.

It is found in the cytoplasm. It localises to the nucleus. The protein resides in the nucleolus. Functionally, retroviral replication requires the nuclear export and translation of unspliced, singly-spliced and multiply-spliced derivatives of the initial genomic transcript. Rec interacts with a highly structured RNA element (RcRE) present in the viral 3'LTR and recruits the cellular nuclear export machinery. This permits export to the cytoplasm of unspliced genomic or incompletely spliced subgenomic viral transcripts. This chain is Endogenous retrovirus group K member 16 Rec protein (ERVK-16), found in Homo sapiens (Human).